The following is a 1189-amino-acid chain: MYKLQVVLVPPSLQATMPIQFGYGPTIAESSQLLPNRTNMAQSAGDASLQYANLRSANVSFTPSYFNQSRFRKFLLFTKPTNTLLNLSDEIIDKCEKMYPSLQEDIEILSLQDNSGCDLDPDFLVKDVFNVNNIVRVILKNEIDLDDSAPVSLYKSVKRSKLNNGSPQSVQPQQQIPSSSGVLRIAKKRPPTGTTTTTTIRSATNGSMRVSTPLARQIYPPPSSKIVSNNSDDEDEDIGERSFLPPPTQPQSPPIRISSGIDAGKKIKSSIVEEDIVSRSATVDPDKTKQQRLLSGTPIMSTMTPNRVTLTGQRVVSEHAHKNELVFSASASSSSFANGGTAAVTAQDINRKPPVTTPRITSGMLKIPEPRISEIEKELKEGPSSPASILPAKAAKIPMKKPYLENGENYESDDSSSSENQETPETEPHSKASLQRSQSSIADNNGSPVKNSPLGDAMPHNVHLAELPKASNTSITKSSNGESWGKQQEHQPPRKSSLETIVEKKSQAEPSGIVEPKRMTNFLDDNQVREKEDTNDKLLEKEILPTIPHNDQPILASSDKSNGTLKSLAGKVSSNNNASKEDGTIINGTIEDDGNDNDEVDTTVRIVPQDSDSSSFPKSDLFKMIEGDDTDLPQWFKGKNSRTSGNSKNSKPYTTVLNKDIDNSKPDPRNILPQRTPRSAAKRAAQLLAGAKKNEVPQKSTEDSSSAASTDDESESGIETDFSSDDDFKRKNMSVPNNGPKDISLHSLKGSVVPVKDSKIINKEVDEERNDKRDSQKKSAVSESSVTNSKISEQMAKSFYPNSNKKQNEATKVETKPATQASSFPVVGGSPSVATKGTTSFNEEGNRKNVKTKAKNESAQIDRQQKETTSRVADLKSANIGGEDLNKKAEGSKEPEKASANIQDANDKNNSKEKEDSKSKQVSQKKLKMTDHLKEGNVQLPKPSANDKLKDLKAKFTNSKTLVPPGIISNEKNNSSANDDDSSSSGSSTEDESSSSSSSSDEETSTSRKARRVVVNTPREPVRSSSKIEAPSPSVNKKINATPDKIPVTQLMDMSSPPSVKSKTTSNPSSILHDLPRKVRPSLSSLSDLVSRGIPDVKEKTSKSNEKSQTKAPSSSDDESSSDSDSNSSSDSVSDSSSDSKSESDSDDSGDSSDDGKSFISAKSASAALGKKKKPSGGFASLIKDFKKK.

A phosphoserine mark is found at S60 and S166. Disordered regions lie at residues 160–260 and 345–1189; these read SKLN…ISSG and TAQD…FKKK. Positions 166–180 are enriched in low complexity; sequence SPQSVQPQQQIPSSS. The segment covering 200 to 210 has biased composition (polar residues); it reads IRSATNGSMRV. Phosphoserine occurs at positions 231 and 252. The segment covering 244–253 has biased composition (pro residues); that stretch reads LPPPTQPQSP. Over residues 368–381 the composition is skewed to basic and acidic residues; it reads PEPRISEIEKELKE. Residues 391–407 are compositionally biased toward low complexity; sequence PAKAAKIPMKKPYLENG. Positions 432–450 are enriched in polar residues; sequence ASLQRSQSSIADNNGSPVK. Residues S437, S439, S447, and S452 each carry the phosphoserine modification. Positions 470-486 are enriched in polar residues; the sequence is ASNTSITKSSNGESWGK. S497 carries the phosphoserine modification. Basic and acidic residues predominate over residues 526-543; sequence NQVREKEDTNDKLLEKEI. The span at 590–601 shows a compositional bias: acidic residues; sequence IEDDGNDNDEVD. A compositionally biased stretch (polar residues) spans 641 to 657; sequence SRTSGNSKNSKPYTTVL. The segment covering 659–668 has biased composition (basic and acidic residues); sequence KDIDNSKPDP. T676 bears the Phosphothreonine mark. Residues 682 to 691 show a composition bias toward low complexity; that stretch reads KRAAQLLAGA. A compositionally biased stretch (basic and acidic residues) spans 692-702; that stretch reads KKNEVPQKSTE. Positions 710 to 725 are enriched in acidic residues; the sequence is TDDESESGIETDFSSD. Positions 756-777 are enriched in basic and acidic residues; that stretch reads KDSKIINKEVDEERNDKRDSQK. Positions 778–792 are enriched in polar residues; it reads KSAVSESSVTNSKIS. Residues 806-815 show a composition bias toward basic and acidic residues; it reads KQNEATKVET. Low complexity predominate over residues 822–833; that stretch reads SSFPVVGGSPSV. The residue at position 830 (S830) is a Phosphoserine. Composition is skewed to basic and acidic residues over residues 884–897, 905–919, and 945–954; these read DLNK…EPEK, ANDK…DSKS, and ANDKLKDLKA. A compositionally biased stretch (low complexity) spans 969–999; that stretch reads SNEKNNSSANDDDSSSSGSSTEDESSSSSSS. Over residues 1023–1039 the composition is skewed to polar residues; the sequence is RSSSKIEAPSPSVNKKI. A Phosphothreonine modification is found at T1042. Over residues 1055-1070 the composition is skewed to low complexity; the sequence is SSPPSVKSKTTSNPSS. Phosphoserine occurs at positions 1056 and 1059. Residues 1095 to 1109 show a composition bias toward basic and acidic residues; sequence PDVKEKTSKSNEKSQ. Low complexity-rich tracts occupy residues 1123 to 1137 and 1158 to 1169; these read DSDS…SDSS and SFISAKSASAAL.

To yeast YKR010c. Component of the RENT complex which is composed of at least NET1, CDC14 and SIR2. Interacts with NSI1. In terms of processing, phosphorylated by CDC5.

Its subcellular location is the nucleus. The protein localises to the nucleolus. Has a role in chromosome maintenance and is involved in mitotic exit. Inhibits the action of CDC14 by sequestering it in the nucleolus. Also binds to RNA polymerase I and stimulates rRNA synthesis. Influences RDNA chromatin by tethering SIR2 to rDNA in the nucleolus. The sequence is that of Nucleolar protein NET1 (NET1) from Saccharomyces cerevisiae (strain ATCC 204508 / S288c) (Baker's yeast).